The sequence spans 382 residues: Telomere-binding protein OPG082 (382 aa).

The protein belongs to the orthopoxvirus OPG082 family.

It is found in the virion. In terms of biological role, binds to the hairpin form of the viral telomeric sequence. Might direct genome encapsidation into the virus particle. The protein is Telomere-binding protein OPG082 (OPG082) of Monkeypox virus.